We begin with the raw amino-acid sequence, 74 residues long: ATP synthase subunit 9, mitochondrial (74 aa).

2 consecutive transmembrane segments (helical) span residues 8-28 (IGAGAATIASAGAAIGIGNVF) and 50-70 (ILGFALTEAIALFAPMMAFLI).

Belongs to the ATPase C chain family. As to quaternary structure, F-type ATPases have 2 components, CF(1) - the catalytic core - and CF(0) - the membrane proton channel. CF(1) has five subunits: alpha(3), beta(3), gamma(1), delta(1), epsilon(1). CF(0) has three main subunits: a, b and c.

Its subcellular location is the mitochondrion membrane. Its function is as follows. This protein is one of the chains of the nonenzymatic membrane component (F0) of mitochondrial ATPase. The sequence is that of ATP synthase subunit 9, mitochondrial (ATP9) from Brassica napus (Rape).